The sequence spans 207 residues: FMN-dependent NADH:quinone oxidoreductase 3 (207 aa).

Residues Ser-10 and Ser-16–Ser-18 each bind FMN.

It belongs to the azoreductase type 1 family. As to quaternary structure, homodimer. Requires FMN as cofactor.

The enzyme catalyses 2 a quinone + NADH + H(+) = 2 a 1,4-benzosemiquinone + NAD(+). It catalyses the reaction N,N-dimethyl-1,4-phenylenediamine + anthranilate + 2 NAD(+) = 2-(4-dimethylaminophenyl)diazenylbenzoate + 2 NADH + 2 H(+). Functionally, quinone reductase that provides resistance to thiol-specific stress caused by electrophilic quinones. In terms of biological role, also exhibits azoreductase activity. Catalyzes the reductive cleavage of the azo bond in aromatic azo compounds to the corresponding amines. This chain is FMN-dependent NADH:quinone oxidoreductase 3, found in Burkholderia lata (strain ATCC 17760 / DSM 23089 / LMG 22485 / NCIMB 9086 / R18194 / 383).